Reading from the N-terminus, the 154-residue chain is Superoxide dismutase [Cu-Zn] (154 aa).

Cu cation contacts are provided by histidine 47 and histidine 64. Cysteine 58 and cysteine 147 form a disulfide bridge. 4 residues coordinate Zn(2+): histidine 64, histidine 72, histidine 81, and aspartate 84. Histidine 121 is a Cu cation binding site. Arginine 144 contacts substrate.

It belongs to the Cu-Zn superoxide dismutase family. Homodimer. Cu cation serves as cofactor. The cofactor is Zn(2+).

Its subcellular location is the cytoplasm. The enzyme catalyses 2 superoxide + 2 H(+) = H2O2 + O2. In terms of biological role, destroys radicals which are normally produced within the cells and which are toxic to biological systems. The protein is Superoxide dismutase [Cu-Zn] (SOD1) of Pleurocordyceps sinensis (Polycephalomyces sinensis).